Consider the following 76-residue polypeptide: Small ribosomal subunit protein bS18 (76 aa).

It belongs to the bacterial ribosomal protein bS18 family. In terms of assembly, part of the 30S ribosomal subunit. Forms a tight heterodimer with protein bS6.

Its function is as follows. Binds as a heterodimer with protein bS6 to the central domain of the 16S rRNA, where it helps stabilize the platform of the 30S subunit. This is Small ribosomal subunit protein bS18 from Marinomonas sp. (strain MWYL1).